A 314-amino-acid polypeptide reads, in one-letter code: MMRLIRTLPLRCFKTRIRRQGSLLCLRCFSSYSKPLLQKSMSLKNIQLSDLSSSPLSKNKEKQEKPEKENEGKHSIGLLDRFSEDFITQGNGLKPTTSQNQLDTIKFYQMLRERGNFSDEQCKIIIALLLQLLNDQFYSCYNDLFLRDMELNKQSHLFSSLETELKFAIQNSRDTQLNEHHLQLLKLKRELNSIHDELNEIIIDLLQKDAKLEFNNQKLENTLLYRQLNLKLNDCSNKIQTKILGDIRSHIENLRWQTTRSGLLVILVLVCSIMIGVSASKKERPGLQEPEEPEILAPKEDIDTTFPQDQHDID.

A mitochondrion-targeting transit peptide spans 1 to 29 (MMRLIRTLPLRCFKTRIRRQGSLLCLRCF). The segment at 52–74 (SSSPLSKNKEKQEKPEKENEGKH) is disordered. Residues 58-74 (KNKEKQEKPEKENEGKH) are compositionally biased toward basic and acidic residues. Residues 177–207 (LNEHHLQLLKLKRELNSIHDELNEIIIDLLQ) are a coiled coil. The helical transmembrane segment at 262-279 (GLLVILVLVCSIMIGVSA) threads the bilayer. A disordered region spans residues 281 to 314 (KKERPGLQEPEEPEILAPKEDIDTTFPQDQHDID).

It is found in the mitochondrion membrane. This is an uncharacterized protein from Saccharomyces cerevisiae (strain ATCC 204508 / S288c) (Baker's yeast).